The primary structure comprises 440 residues: Adenylosuccinate lyase (440 aa).

Residues 4 to 5 (RY), 67 to 69 (KHD), and 93 to 94 (TS) each bind N(6)-(1,2-dicarboxyethyl)-AMP. The Proton donor/acceptor role is filled by His-141. N(6)-(1,2-dicarboxyethyl)-AMP is bound at residue Gln-212. The active-site Proton donor/acceptor is Ser-262. N(6)-(1,2-dicarboxyethyl)-AMP-binding positions include Ser-263, 268-270 (KRN), Asn-276, and 307-311 (SVERF).

Belongs to the lyase 1 family. Adenylosuccinate lyase subfamily. In terms of assembly, homotetramer. Residues from neighboring subunits contribute catalytic and substrate-binding residues to each active site.

The enzyme catalyses N(6)-(1,2-dicarboxyethyl)-AMP = fumarate + AMP. The catalysed reaction is (2S)-2-[5-amino-1-(5-phospho-beta-D-ribosyl)imidazole-4-carboxamido]succinate = 5-amino-1-(5-phospho-beta-D-ribosyl)imidazole-4-carboxamide + fumarate. The protein operates within purine metabolism; AMP biosynthesis via de novo pathway; AMP from IMP: step 2/2. It participates in purine metabolism; IMP biosynthesis via de novo pathway; 5-amino-1-(5-phospho-D-ribosyl)imidazole-4-carboxamide from 5-amino-1-(5-phospho-D-ribosyl)imidazole-4-carboxylate: step 2/2. Its function is as follows. Catalyzes two reactions in de novo purine nucleotide biosynthesis. Catalyzes the breakdown of 5-aminoimidazole- (N-succinylocarboxamide) ribotide (SAICAR or 2-[5-amino-1-(5-phospho-beta-D-ribosyl)imidazole-4-carboxamido]succinate) to 5-aminoimidazole-4-carboxamide ribotide (AICAR or 5-amino-1-(5-phospho-beta-D-ribosyl)imidazole-4-carboxamide) and fumarate, and of adenylosuccinate (ADS or N(6)-(1,2-dicarboxyethyl)-AMP) to adenosine monophosphate (AMP) and fumarate. This chain is Adenylosuccinate lyase (purB), found in Helicobacter pylori (strain J99 / ATCC 700824) (Campylobacter pylori J99).